Reading from the N-terminus, the 129-residue chain is Small ribosomal subunit protein uS11 (129 aa).

It belongs to the universal ribosomal protein uS11 family. As to quaternary structure, part of the 30S ribosomal subunit. Interacts with proteins S7 and S18. Binds to IF-3.

Located on the platform of the 30S subunit, it bridges several disparate RNA helices of the 16S rRNA. Forms part of the Shine-Dalgarno cleft in the 70S ribosome. This Nitratidesulfovibrio vulgaris (strain DSM 19637 / Miyazaki F) (Desulfovibrio vulgaris) protein is Small ribosomal subunit protein uS11.